We begin with the raw amino-acid sequence, 61 residues long: Small ribosomal subunit protein uS14 (61 aa).

The Zn(2+) site is built by Cys24, Cys27, Cys40, and Cys43.

The protein belongs to the universal ribosomal protein uS14 family. Zinc-binding uS14 subfamily. As to quaternary structure, part of the 30S ribosomal subunit. Contacts proteins S3 and S10. Requires Zn(2+) as cofactor.

Its function is as follows. Binds 16S rRNA, required for the assembly of 30S particles and may also be responsible for determining the conformation of the 16S rRNA at the A site. This chain is Small ribosomal subunit protein uS14, found in Campylobacter concisus (strain 13826).